The sequence spans 902 residues: Cytosolic 10-formyltetrahydrofolate dehydrogenase (902 aa).

The hydrolase domain stretch occupies residues 1–310 (MKIAVIGQSL…PASQYFKTAD (310 aa)). 88 to 90 (QFI) lines the (6R)-10-formyltetrahydrofolate pocket. The Proton donor role is filled by histidine 106. Aspartate 142 contributes to the (6R)-10-formyltetrahydrofolate binding site. Residues 318 to 395 (EEEQKVSEEI…EFIQMVVRRM (78 aa)) enclose the Carrier domain. The residue at position 354 (serine 354) is an O-(pantetheine 4'-phosphoryl)serine. Residues 417 to 902 (TVKIPHQLFI…LKTKAVTIEY (486 aa)) form an aldehyde dehydrogenase domain region. Residues 571–573 (IPW), 597–600 (KPAQ), 630–635 (GSLIGQ), 650–651 (GS), and 673–674 (EL) each bind NADP(+). Glutamate 673 acts as the Proton acceptor in catalysis. Cysteine 707 acts as the Proton donor in catalysis. Residues lysine 757 and 804-806 (ESF) each bind NADP(+).

The protein in the N-terminal section; belongs to the GART family. In the C-terminal section; belongs to the aldehyde dehydrogenase family. ALDH1L subfamily. In terms of assembly, homotetramer. In terms of processing, phosphopantetheinylation at Ser-354 by AASDHPPT is required for the formyltetrahydrofolate dehydrogenase activity.

The protein localises to the cytoplasm. Its subcellular location is the cytosol. The enzyme catalyses (6R)-10-formyltetrahydrofolate + NADP(+) + H2O = (6S)-5,6,7,8-tetrahydrofolate + CO2 + NADPH + H(+). Functionally, cytosolic 10-formyltetrahydrofolate dehydrogenase that catalyzes the NADP(+)-dependent conversion of 10-formyltetrahydrofolate to tetrahydrofolate and carbon dioxide. May also have an NADP(+)-dependent aldehyde dehydrogenase activity towards formaldehyde, acetaldehyde, propionaldehyde, and benzaldehyde. This chain is Cytosolic 10-formyltetrahydrofolate dehydrogenase (aldh1l1), found in Xenopus laevis (African clawed frog).